The following is a 333-amino-acid chain: Pantothenate synthetase (333 aa).

M27–H34 serves as a coordination point for ATP. Residue H34 is the Proton donor of the active site. Q61 contributes to the (R)-pantoate binding site. Q61 is a binding site for beta-alanine. G148–D151 provides a ligand contact to ATP. (R)-pantoate is bound at residue Q154. Residues V177 and L185–R188 contribute to the ATP site.

It belongs to the pantothenate synthetase family. As to quaternary structure, homodimer.

The protein localises to the cytoplasm. It carries out the reaction (R)-pantoate + beta-alanine + ATP = (R)-pantothenate + AMP + diphosphate + H(+). It functions in the pathway cofactor biosynthesis; (R)-pantothenate biosynthesis; (R)-pantothenate from (R)-pantoate and beta-alanine: step 1/1. Catalyzes the condensation of pantoate with beta-alanine in an ATP-dependent reaction via a pantoyl-adenylate intermediate. The chain is Pantothenate synthetase from Streptomyces avermitilis (strain ATCC 31267 / DSM 46492 / JCM 5070 / NBRC 14893 / NCIMB 12804 / NRRL 8165 / MA-4680).